We begin with the raw amino-acid sequence, 330 residues long: DNA primase small subunit PriS (330 aa).

Active-site residues include aspartate 101 and aspartate 103. The Zn(2+) site is built by cysteine 116, cysteine 119, cysteine 128, and aspartate 131. Aspartate 235 is an active-site residue.

Belongs to the eukaryotic-type primase small subunit family. Heterodimer of a small subunit (PriS) and a large subunit (PriL). Mg(2+) is required as a cofactor. Mn(2+) serves as cofactor.

Functionally, catalytic subunit of DNA primase, an RNA polymerase that catalyzes the synthesis of short RNA molecules used as primers for DNA polymerase during DNA replication. The small subunit contains the primase catalytic core and has DNA synthesis activity on its own. Binding to the large subunit stabilizes and modulates the activity, increasing the rate of DNA synthesis while decreasing the length of the DNA fragments, and conferring RNA synthesis capability. The DNA polymerase activity may enable DNA primase to also catalyze primer extension after primer synthesis. May also play a role in DNA repair. This is DNA primase small subunit PriS from Saccharolobus islandicus (strain M.16.27) (Sulfolobus islandicus).